The following is a 487-amino-acid chain: Complement C1r subcomponent-like protein (487 aa).

Residues M1 to A35 form the signal peptide. The CUB domain maps to R39 to V163. A disulfide bridge connects residues C94 and C112. N-linked (GlcNAc...) asparagine glycosylation is found at N147 and N166. Residues V165–P230 form the Sushi domain. C195 and C228 form a disulfide bridge. An N-linked (GlcNAc...) (complex) asparagine glycan is attached at N242. Residues T245 to N484 form the Peptidase S1 domain. The active-site Charge relay system is H283. An N-linked (GlcNAc...) asparagine glycan is attached at N296. D339 acts as the Charge relay system in catalysis. N363 carries N-linked (GlcNAc...) asparagine glycosylation. Intrachain disulfides connect C402-C421 and C432-C462. S436 functions as the Charge relay system in the catalytic mechanism.

The protein belongs to the peptidase S1 family. Highly expressed in placenta, liver, kidney, pancreas, moderately in lung, spleen, prostate, ovary, colon, and PBL, and weakly in heart, skeletal muscle, thymus, testis, and small intestine. Expressed in PC-3 (prostate adenocarcinoma) and SK-OV-3 (ovary adenocarcinoma) cells, but not in LoVo and HT-29 (colon adenocarcinoma), SMMC7721 (hepatocellular carcinoma), CaoV-3 (ovary adenocarcinoma), HeLa (cervix epithelioid carcinoma), MCF-7 (breast adenocarcinoma), U-251MG (glioma) or A-549 (lung carcinoma) cells. Widely expressed in myeloid leukemia cell lines, including K-562 (chronic myelogenous leukemia), THP-1 (myelomonocytic leukemia), HL-60 and NB4 (promyelocytic leukemia), and KG-1 (acute myelogenous leukemia) cells. Expressed mainly in the liver and in serum (at protein level).

The protein localises to the secreted. Functionally, mediates the proteolytic cleavage of HP/haptoglobin in the endoplasmic reticulum. This chain is Complement C1r subcomponent-like protein (C1RL), found in Homo sapiens (Human).